Reading from the N-terminus, the 105-residue chain is Large ribosomal subunit protein eL36 (105 aa).

Residue K62 is modified to N6-acetyllysine.

This sequence belongs to the eukaryotic ribosomal protein eL36 family. In terms of assembly, component of the large ribosomal subunit.

The protein resides in the cytoplasm. The protein localises to the cytosol. Component of the large ribosomal subunit. The ribosome is a large ribonucleoprotein complex responsible for the synthesis of proteins in the cell. The polypeptide is Large ribosomal subunit protein eL36 (RPL36) (Bos taurus (Bovine)).